A 688-amino-acid chain; its full sequence is Translation initiation factor IF-2 (688 aa).

The disordered stretch occupies residues 54-95; the sequence is KEKSEKTKEEDDEIETTAKNPIKESTNNKKPNKRDDKNEKVN. The segment covering 86 to 95 has biased composition (basic and acidic residues); that stretch reads KRDDKNEKVN. Residues 187-354 enclose the tr-type G domain; that stretch reads KRSPIITVMG…MILLSSEILE (168 aa). Residues 196–203 form a G1 region; that stretch reads GHVDHGKT. GTP is bound at residue 196-203; sequence GHVDHGKT. Positions 221–225 are G2; it reads GITQH. The G3 stretch occupies residues 242–245; it reads DTPG. Residues 242–246 and 296–299 each bind GTP; these read DTPGH and NKID. The G4 stretch occupies residues 296–299; it reads NKID. The tract at residues 332 to 334 is G5; sequence SAH.

Belongs to the TRAFAC class translation factor GTPase superfamily. Classic translation factor GTPase family. IF-2 subfamily.

The protein resides in the cytoplasm. In terms of biological role, one of the essential components for the initiation of protein synthesis. Protects formylmethionyl-tRNA from spontaneous hydrolysis and promotes its binding to the 30S ribosomal subunits. Also involved in the hydrolysis of GTP during the formation of the 70S ribosomal complex. The sequence is that of Translation initiation factor IF-2 from Clostridium botulinum (strain Okra / Type B1).